Here is a 234-residue protein sequence, read N- to C-terminus: NAD-dependent protein deacylase (234 aa).

The Deacetylase sirtuin-type domain occupies Met-1–Pro-234. An NAD(+)-binding site is contributed by Gly-9–Trp-28. The substrate site is built by Tyr-53 and Arg-56. Gln-86–Asp-89 is an NAD(+) binding site. His-104 acts as the Proton acceptor in catalysis. Gly-175–Ser-177 serves as a coordination point for NAD(+).

It belongs to the sirtuin family. Class III subfamily.

The protein localises to the cytoplasm. The catalysed reaction is N(6)-acetyl-L-lysyl-[protein] + NAD(+) + H2O = 2''-O-acetyl-ADP-D-ribose + nicotinamide + L-lysyl-[protein]. The enzyme catalyses N(6)-succinyl-L-lysyl-[protein] + NAD(+) + H2O = 2''-O-succinyl-ADP-D-ribose + nicotinamide + L-lysyl-[protein]. Functionally, NAD-dependent lysine deacetylase and desuccinylase that specifically removes acetyl and succinyl groups on target proteins. Modulates the activities of several proteins which are inactive in their acylated form. The polypeptide is NAD-dependent protein deacylase (Bacteroides thetaiotaomicron (strain ATCC 29148 / DSM 2079 / JCM 5827 / CCUG 10774 / NCTC 10582 / VPI-5482 / E50)).